The chain runs to 189 residues: Pyridoxal 5'-phosphate synthase subunit PdxT (189 aa).

Residue 46 to 48 (GES) coordinates L-glutamine. C78 functions as the Nucleophile in the catalytic mechanism. L-glutamine is bound by residues R107 and 136-137 (IR). Catalysis depends on charge relay system residues H173 and E175.

Belongs to the glutaminase PdxT/SNO family. In terms of assembly, in the presence of PdxS, forms a dodecamer of heterodimers. Only shows activity in the heterodimer.

It carries out the reaction aldehydo-D-ribose 5-phosphate + D-glyceraldehyde 3-phosphate + L-glutamine = pyridoxal 5'-phosphate + L-glutamate + phosphate + 3 H2O + H(+). It catalyses the reaction L-glutamine + H2O = L-glutamate + NH4(+). It functions in the pathway cofactor biosynthesis; pyridoxal 5'-phosphate biosynthesis. Functionally, catalyzes the hydrolysis of glutamine to glutamate and ammonia as part of the biosynthesis of pyridoxal 5'-phosphate. The resulting ammonia molecule is channeled to the active site of PdxS. The protein is Pyridoxal 5'-phosphate synthase subunit PdxT of Roseiflexus sp. (strain RS-1).